A 138-amino-acid chain; its full sequence is Large ribosomal subunit protein bL17 (138 aa).

Residues 118–138 (RDEDAKGKDSGPSQDGAAEAA) are disordered.

It belongs to the bacterial ribosomal protein bL17 family. Part of the 50S ribosomal subunit. Contacts protein L32.

This is Large ribosomal subunit protein bL17 from Rhodopseudomonas palustris (strain HaA2).